We begin with the raw amino-acid sequence, 750 residues long: Photosystem I P700 chlorophyll a apoprotein A1 (750 aa).

Transmembrane regions (helical) follow at residues V70 to A93, L156 to H179, L195 to L219, I291 to Y309, W346 to Y369, L385 to V411, A433 to H455, and F531 to L549. [4Fe-4S] cluster contacts are provided by C573 and C582. Helical transmembrane passes span H589–W610 and L664–F686. H675 lines the chlorophyll a' pocket. The chlorophyll a site is built by M683 and Y691. W692 contacts phylloquinone. The helical transmembrane segment at A724–A744 threads the bilayer.

Belongs to the PsaA/PsaB family. As to quaternary structure, the PsaA/B heterodimer binds the P700 chlorophyll special pair and subsequent electron acceptors. PSI consists of a core antenna complex that captures photons, and an electron transfer chain that converts photonic excitation into a charge separation. The eukaryotic PSI reaction center is composed of at least 11 subunits. It depends on P700 is a chlorophyll a/chlorophyll a' dimer, A0 is one or more chlorophyll a, A1 is one or both phylloquinones and FX is a shared 4Fe-4S iron-sulfur center. as a cofactor.

The protein localises to the plastid. Its subcellular location is the chloroplast thylakoid membrane. The catalysed reaction is reduced [plastocyanin] + hnu + oxidized [2Fe-2S]-[ferredoxin] = oxidized [plastocyanin] + reduced [2Fe-2S]-[ferredoxin]. In terms of biological role, psaA and PsaB bind P700, the primary electron donor of photosystem I (PSI), as well as the electron acceptors A0, A1 and FX. PSI is a plastocyanin-ferredoxin oxidoreductase, converting photonic excitation into a charge separation, which transfers an electron from the donor P700 chlorophyll pair to the spectroscopically characterized acceptors A0, A1, FX, FA and FB in turn. Oxidized P700 is reduced on the lumenal side of the thylakoid membrane by plastocyanin. This chain is Photosystem I P700 chlorophyll a apoprotein A1, found in Arabidopsis thaliana (Mouse-ear cress).